Here is a 303-residue protein sequence, read N- to C-terminus: Quinolinate synthase (303 aa).

Positions 24 and 41 each coordinate iminosuccinate. Position 86 (Cys86) interacts with [4Fe-4S] cluster. Iminosuccinate is bound by residues 112-114 (YIN) and Ser129. Cys172 provides a ligand contact to [4Fe-4S] cluster. Iminosuccinate is bound by residues 198 to 200 (HPE) and Thr215. [4Fe-4S] cluster is bound at residue Cys260.

This sequence belongs to the quinolinate synthase family. Type 2 subfamily. It depends on [4Fe-4S] cluster as a cofactor.

It localises to the cytoplasm. The catalysed reaction is iminosuccinate + dihydroxyacetone phosphate = quinolinate + phosphate + 2 H2O + H(+). It functions in the pathway cofactor biosynthesis; NAD(+) biosynthesis; quinolinate from iminoaspartate: step 1/1. Its function is as follows. Catalyzes the condensation of iminoaspartate with dihydroxyacetone phosphate to form quinolinate. The polypeptide is Quinolinate synthase (Caldicellulosiruptor saccharolyticus (strain ATCC 43494 / DSM 8903 / Tp8T 6331)).